A 469-amino-acid polypeptide reads, in one-letter code: Abscisic acid 8'-hydroxylase CYP707A2 (469 aa).

Residues 3–23 (FVSMLCLFTFISLTLLLIHSI) traverse the membrane as a helical segment. Position 414 (Cys-414) interacts with heme.

This sequence belongs to the cytochrome P450 family. Requires heme as cofactor. In terms of tissue distribution, expressed at low levels in fruit.

It localises to the membrane. It catalyses the reaction 2-cis-(+)-abscisate + reduced [NADPH--hemoprotein reductase] + O2 = (+)-8'-hydroxyabscisate + oxidized [NADPH--hemoprotein reductase] + H2O + H(+). It functions in the pathway plant hormone degradation; abscisic acid degradation. In terms of biological role, negative regulator of fruit ripening involved in the oxidative degradation of abscisic acid (ABA). The sequence is that of Abscisic acid 8'-hydroxylase CYP707A2 from Solanum lycopersicum (Tomato).